Here is a 930-residue protein sequence, read N- to C-terminus: Translation initiation factor IF-2 (930 aa).

The span at 50 to 67 shows a compositional bias: low complexity; the sequence is FKPAAAPKVEAKPAAPKV. 2 disordered regions span residues 50–195 and 260–346; these read FKPA…PRID and EVVP…HELP. Composition is skewed to basic and acidic residues over residues 68-90 and 110-125; these read SAEK…EAKP and FKAE…AERR. The segment covering 129–141 has biased composition (low complexity); the sequence is KGNNRDQQQNGNR. Basic and acidic residues-rich tracts occupy residues 157 to 167 and 262 to 295; these read RDNRRFNDQAK and VPEK…DGPR. A compositionally biased stretch (low complexity) spans 309 to 318; sequence NQKNSNWNNN. Residues 337–346 show a composition bias toward basic and acidic residues; the sequence is VTERKFHELP. The tr-type G domain occupies 432–599; sequence ERPPVVTIMG…TVLLVAEIQE (168 aa). The segment at 441–448 is G1; it reads GHVDHGKT. Residue 441 to 448 participates in GTP binding; that stretch reads GHVDHGKT. The interval 466–470 is G2; that stretch reads GITQH. The tract at residues 487 to 490 is G3; the sequence is DTPG. GTP contacts are provided by residues 487 to 491 and 541 to 544; these read DTPGH and NKID. Positions 541–544 are G4; the sequence is NKID. The interval 577–579 is G5; the sequence is SAK.

The protein belongs to the TRAFAC class translation factor GTPase superfamily. Classic translation factor GTPase family. IF-2 subfamily.

It is found in the cytoplasm. Functionally, one of the essential components for the initiation of protein synthesis. Protects formylmethionyl-tRNA from spontaneous hydrolysis and promotes its binding to the 30S ribosomal subunits. Also involved in the hydrolysis of GTP during the formation of the 70S ribosomal complex. The protein is Translation initiation factor IF-2 of Streptococcus pneumoniae (strain Hungary19A-6).